The primary structure comprises 122 residues: Large ribosomal subunit protein bL12 (122 aa).

The protein belongs to the bacterial ribosomal protein bL12 family. As to quaternary structure, homodimer. Part of the ribosomal stalk of the 50S ribosomal subunit. Forms a multimeric L10(L12)X complex, where L10 forms an elongated spine to which 2 to 4 L12 dimers bind in a sequential fashion. Binds GTP-bound translation factors.

Functionally, forms part of the ribosomal stalk which helps the ribosome interact with GTP-bound translation factors. Is thus essential for accurate translation. This is Large ribosomal subunit protein bL12 from Vibrio vulnificus (strain CMCP6).